The following is an 84-amino-acid chain: Conotoxin Am6.1 (84 aa).

Residues Met-1–Ala-19 form the signal peptide. A propeptide spanning residues Met-20 to Arg-47 is cleaved from the precursor. Cystine bridges form between Cys-48-Cys-62, Cys-55-Cys-66, and Cys-61-Cys-71. Trp-51 bears the 6'-bromotryptophan; in Am6.1b mark. 2 positions are modified to 4-carboxyglutamate; partial; in Am6.1b and Am6.1c: Glu-60 and Glu-64. Residues Arg-78–Ile-84 constitute a propeptide that is removed on maturation.

Belongs to the conotoxin O2 family. In terms of processing, three forms of this peptides have been described. The unmodified Am6.1a (Am3286) is not detected in the venom; Am6.1b (Am3408) is only Trp brominated, while Am6.1c (Am3452) is both Trp brominated and Glu gamma-carboxyglutamated. Both Am6.1b and Am6.1c are detected in the venom. In terms of tissue distribution, expressed by the venom duct.

It localises to the secreted. In terms of biological role, gamma-conotoxins may act on voltage-gated non-specific cation pacemaker channels (HCN). This is Conotoxin Am6.1 from Conus amadis (Amadis cone).